A 106-amino-acid chain; its full sequence is Protein aveugle (106 aa).

In terms of domain architecture, SAM spans 26-91 (WTVSDVLKWY…WREIVKQRLK (66 aa)).

As to quaternary structure, interacts with the SAM domain of cnk.

It is found in the cytoplasm. Its subcellular location is the membrane. Functionally, required for normal photoreceptor differentiation between Ras and Raf for EGFR signaling in the eye and for mitogen-activated protein kinase phosphorylation. Probably acts together with Cnk to promote Raf activation, perhaps by recruiting an activating kinase. The sequence is that of Protein aveugle (ave) from Drosophila melanogaster (Fruit fly).